A 439-amino-acid chain; its full sequence is Sodium-dependent phosphate transport protein 3 (439 aa).

N-linked (GlcNAc...) asparagine glycosylation is found at asparagine 47, asparagine 56, asparagine 68, and asparagine 69. 9 consecutive transmembrane segments (helical) span residues 98-118 (INYGIILTLIPSGYLAGIFGA), 130-150 (SLLTLFTPLAADFGVILVIMV), 183-203 (TIAGSGSAFGSFIILCVGGLI), 211-231 (FIFYIFGSTGCVCCLLWFTVI), 273-293 (LPLWAIFLGFFSHFWLCTIIL), 317-337 (LPFIAAASCTILGGQLADFLL), 350-369 (LFSSLGLLLPSICAVALPFV), 374-396 (VITIILLILIPGTSNLCDSGFII), and 415-435 (GFGLIAGIISSTATGFLISQV).

Belongs to the major facilitator superfamily. Sodium/anion cotransporter family. As to expression, expressed in the small intestine, kidney, spleen and testis. Not detected in fetal brain, bone marrow, and mammary gland.

Its subcellular location is the apical cell membrane. It carries out the reaction 3 Na(+)(out) + phosphate(out) = 3 Na(+)(in) + phosphate(in). The enzyme catalyses urate(out) + n chloride(in) = urate(in) + n chloride(out). Functionally, acts as a membrane potential-dependent organic anion transporter, the transport requires a low concentration of chloride ions. Mediates chloride-dependent transport of urate. Can actively transport inorganic phosphate into cells via Na(+) cotransport. This Homo sapiens (Human) protein is Sodium-dependent phosphate transport protein 3 (SLC17A2).